The primary structure comprises 558 residues: Formate--tetrahydrofolate ligase (558 aa).

ATP is bound at residue Thr65–Thr72.

The protein belongs to the formate--tetrahydrofolate ligase family.

The enzyme catalyses (6S)-5,6,7,8-tetrahydrofolate + formate + ATP = (6R)-10-formyltetrahydrofolate + ADP + phosphate. It participates in one-carbon metabolism; tetrahydrofolate interconversion. This chain is Formate--tetrahydrofolate ligase, found in Methylobacterium nodulans (strain LMG 21967 / CNCM I-2342 / ORS 2060).